A 451-amino-acid chain; its full sequence is Tetraspanin-14 (451 aa).

Residues 1–56 (MPHRAPRRFMKTAPGACDWEQCLLMGSGEPTRARAVVSSSHKQRKPRQEISACLKW) lie on the Cytoplasmic side of the membrane. A Basolateral membrane targeting motif is present at residues 20–24 (EQCLL). The helical transmembrane segment at 57–77 (LVFLLNSIVFLVGVGILALGV) threads the bilayer. The Extracellular portion of the chain corresponds to 78–96 (YLFIKDFREVKLVDIILNP). Residues 97–117 (AILISIFGFSICVVSFFGFMG) form a helical membrane-spanning segment. At 118 to 130 (ALRDNIFLLKCFA) the chain is on the cytoplasmic side. A helical transmembrane segment spans residues 131-151 (ACVFLSYILVVAVTLVFFTLF). The Extracellular segment spans residues 152 to 285 (YTDTTEGLSA…QPLRTLFESH (134 aa)). N-linked (GlcNAc...) asparagine glycosylation is found at Asn-205 and Asn-211. Residues 286–306 (AVHVGAFVALLIVPVCISVCL) form a helical membrane-spanning segment. The Cytoplasmic portion of the chain corresponds to 307–451 (TNILAKQVDH…TDLVPQKSKS (145 aa)). The tract at residues 328-451 (NDRRRKRDHN…TDLVPQKSKS (124 aa)) is disordered. Residues 366-376 (PDIPPPLPPIE) show a composition bias toward pro residues. The segment covering 410–434 (ATTTRTPPAAAGPAPTPQATTTNRT) has biased composition (low complexity). A compositionally biased stretch (polar residues) spans 435 to 444 (HQWVLQQTDL).

The protein belongs to the tetraspanin (TM4SF) family. As to expression, expressed in the germline, particularly in sperm cells. Expressed in the germline (particularly in sperm cells), anterior sensory cilia, hypodermis and vulva (at protein level). In terms of tissue distribution, expressed in the pharynx, hypodermis and vulva (at protein level).

The protein localises to the cell membrane. The protein resides in the cytoplasmic vesicle membrane. It is found in the endosome membrane. Its subcellular location is the early endosome membrane. It localises to the late endosome membrane. The protein localises to the recycling endosome membrane. The protein resides in the apical cell membrane. It is found in the basolateral cell membrane. Functions redundantly with tsp-12 to regulate cell surface levels of the BMP type II receptor daf-4 (but not BMP type I receptor sma-6), probably by regulating endosomal sorting and recycling of receptors, preventing their targeting to degradative lysosomes. Together with tsp-12, regulates cell fate specification in the postembryonic mesodermal M lineage, body size, male development and vulva development, probably by positively modulating BMP-like Sma/Mab signaling. Together with tsp-12 involved in maintaining the structural and functional integrity of the endosomal network. Together with tsp-12, probably acts by modulating the activation of glp-1, Notch-like receptor, to regulate germline maturation. Its function is as follows. Functions redundantly with tsp-12 to regulate cell fate specification in the postembryonic mesodermal M lineage, body size, embryonic and vulva development. In terms of biological role, functions redundantly with tsp-12 to regulate cell fate specification in the postembryonic mesodermal M lineage. Likely plays a complementary role in mesodermal development with tsp-14 isoform a, but may be more critical. The chain is Tetraspanin-14 from Caenorhabditis elegans.